Reading from the N-terminus, the 61-residue chain is Large ribosomal subunit protein uL30 (61 aa).

Belongs to the universal ribosomal protein uL30 family. In terms of assembly, part of the 50S ribosomal subunit.

This is Large ribosomal subunit protein uL30 from Treponema denticola (strain ATCC 35405 / DSM 14222 / CIP 103919 / JCM 8153 / KCTC 15104).